The following is a 431-amino-acid chain: MFAKLSARGIATRMSFLAQKTASQETTAAAGSRSELVYARENKYGAHNYHPLPVALTKGEGVFVWDVEGKRYFDYLSAYSAVNQGHCHPKIVAALTAQASKLALTSRAFYSDVLGEYEEYVTKLFGFDKVLPMNTGVEGGETACKLARKWGYLEKKIPANQAKIIFARNNFWGRTLSAVSASNDPSSYEGFGPFMPGFELIEYDNVSALEESLKDPNVCAFMVEPIQGEAGVVVPSDGYLKKVRELCTKYNVLWIADEVQTGLARTGKLLAVDYEQVQPDILILGKALSGGMYPVSAVLCNDQVMLCIKPGEHGSTYGGNPLGCRVAMAALEVLQEEKLAENAFKMGDLLRNELSTLPKDVVSVVRGKGLLNAIVINQKFDAWEVCLRLKENGLLAKPTHGDIIRFAPPLVINETQMRESIDIIRKTILSM.

N6-(pyridoxal phosphate)lysine is present on Lys-286.

Belongs to the class-III pyridoxal-phosphate-dependent aminotransferase family. In terms of assembly, homotetramer. It depends on pyridoxal 5'-phosphate as a cofactor.

It is found in the mitochondrion matrix. The catalysed reaction is a 2-oxocarboxylate + L-ornithine = L-glutamate 5-semialdehyde + an L-alpha-amino acid. It functions in the pathway amino-acid biosynthesis; L-proline biosynthesis; L-glutamate 5-semialdehyde from L-ornithine: step 1/1. This chain is Ornithine aminotransferase, mitochondrial (Oat), found in Drosophila melanogaster (Fruit fly).